Here is a 149-residue protein sequence, read N- to C-terminus: Golgi apparatus membrane protein tvp-18 (149 aa).

N11 carries N-linked (GlcNAc...) asparagine glycosylation. 4 helical membrane passes run W18 to F38, I41 to V61, N84 to I103, and S108 to L128.

It belongs to the TVP18 family.

The protein localises to the golgi apparatus membrane. Functionally, golgi membrane protein involved in vesicular trafficking. This chain is Golgi apparatus membrane protein tvp-18 (tvp-18), found in Neurospora crassa (strain ATCC 24698 / 74-OR23-1A / CBS 708.71 / DSM 1257 / FGSC 987).